A 135-amino-acid chain; its full sequence is uncharacterized protein (135 aa).

The segment at 100–125 (KESPATSSEDISSCSDCDSERLQSDD) is disordered. Residues 106-115 (SSEDISSCSD) show a composition bias toward low complexity.

This is an uncharacterized protein from Microplitis demolitor (Parasitoid wasp).